Reading from the N-terminus, the 196-residue chain is Somatotropin (196 aa).

The signal sequence occupies residues 1-18; it reads MEKVVLLLSVLSLGVVCP. Glutamine 19 is modified (pyrrolidone carboxylic acid). Residue histidine 35 coordinates Zn(2+). A disulfide bond links cysteine 69 and cysteine 169. A Zn(2+)-binding site is contributed by glutamate 178. A disulfide bridge connects residues cysteine 186 and cysteine 194.

It belongs to the somatotropin/prolactin family.

The protein resides in the secreted. Its function is as follows. Growth hormone plays an important role in growth control and is involved in the regulation of several anabolic processes. Implicated as an osmoregulatory substance important for seawater adaptation. In Siganus guttatus (Orange-spotted spinefoot), this protein is Somatotropin (gh).